Consider the following 429-residue polypeptide: Adenylosuccinate synthetase (429 aa).

GTP is bound by residues 11-17 (GDEGKGK) and 39-41 (GHT). Aspartate 12 serves as the catalytic Proton acceptor. Aspartate 12 and glycine 39 together coordinate Mg(2+). Residues 12-15 (DEGK), 37-40 (NAGH), threonine 130, arginine 144, asparagine 226, threonine 241, and arginine 305 contribute to the IMP site. Histidine 40 serves as the catalytic Proton donor. Residue 301–307 (VTTGRRR) coordinates substrate. GTP-binding positions include arginine 307, 333–335 (KLD), and 415–417 (GVG).

Belongs to the adenylosuccinate synthetase family. As to quaternary structure, homodimer. It depends on Mg(2+) as a cofactor.

The protein resides in the cytoplasm. It carries out the reaction IMP + L-aspartate + GTP = N(6)-(1,2-dicarboxyethyl)-AMP + GDP + phosphate + 2 H(+). It participates in purine metabolism; AMP biosynthesis via de novo pathway; AMP from IMP: step 1/2. Functionally, plays an important role in the de novo pathway and in the salvage pathway of purine nucleotide biosynthesis. Catalyzes the first committed step in the biosynthesis of AMP from IMP. This is Adenylosuccinate synthetase from Yarrowia lipolytica (strain CLIB 122 / E 150) (Yeast).